The following is a 79-amino-acid chain: ATP synthase subunit c (79 aa).

Transmembrane regions (helical) follow at residues 7-27 (VSGM…GAGI) and 56-76 (IGSA…LFLI).

It belongs to the ATPase C chain family. F-type ATPases have 2 components, F(1) - the catalytic core - and F(0) - the membrane proton channel. F(1) has five subunits: alpha(3), beta(3), gamma(1), delta(1), epsilon(1). F(0) has three main subunits: a(1), b(2) and c(10-14). The alpha and beta chains form an alternating ring which encloses part of the gamma chain. F(1) is attached to F(0) by a central stalk formed by the gamma and epsilon chains, while a peripheral stalk is formed by the delta and b chains.

It is found in the cell membrane. In terms of biological role, f(1)F(0) ATP synthase produces ATP from ADP in the presence of a proton or sodium gradient. F-type ATPases consist of two structural domains, F(1) containing the extramembraneous catalytic core and F(0) containing the membrane proton channel, linked together by a central stalk and a peripheral stalk. During catalysis, ATP synthesis in the catalytic domain of F(1) is coupled via a rotary mechanism of the central stalk subunits to proton translocation. Functionally, key component of the F(0) channel; it plays a direct role in translocation across the membrane. A homomeric c-ring of between 10-14 subunits forms the central stalk rotor element with the F(1) delta and epsilon subunits. In Clostridium botulinum (strain Hall / ATCC 3502 / NCTC 13319 / Type A), this protein is ATP synthase subunit c.